The following is an 876-amino-acid chain: Envelope glycoprotein gp160 (876 aa).

The first 33 residues, 1-33 (MTVTMKVMKKNNRKSWSLYIAMALLIPCLSYSK), serve as a signal peptide directing secretion. Residues 34-697 (QLYATVYSGV…ITKWLWYIKI (664 aa)) lie on the Extracellular side of the membrane. C55 and C75 are disulfide-bonded. N-linked (GlcNAc...) asparagine; by host glycans are attached at residues N60, N89, N138, N144, N152, N156, N181, N187, N197, N229, N234, N241, N262, N276, N293, N323, N337, N357, and N361. Cystine bridges form between C120-C205, C127-C196, C132-C153, C218-C247, and C228-C239. A V1 region spans residues 132-152 (CVDLQTNKTGLLNETINEMRN). The segment at 153-196 (CSFNVTTVLTDKKEQKQALFYVSDLSKVNDSNAVNGTTYMLTNC) is V2. A V3 region spans residues 296–333 (CIREGIAEVQDIYTGPMRWRSMTLKRSNNTSPRSRVAY). A disulfide bridge links C296 with C334. The interval 369-379 (TSGGDAEVSHL) is CD4-binding loop. 2 disulfide bridges follow: C383/C452 and C390/C425. The segment at 390–425 (CNTSGMFNYTFINCTKSGCQEIKGSNETNKNGTIPC) is V4. N-linked (GlcNAc...) asparagine; by host glycans are attached at residues N391, N397, N402, N415, N420, N449, N455, and N468. 2 V5 regions span residues 468 to 478 (NSTGENTLRPV) and 470 to 478 (TGENTLRPV). The segment at 524 to 544 (AVGLGMLFLGVLSAAGSTMGA) is fusion peptide. The segment at 586-604 (RQLRARLQALETLIQNQQR) is immunosuppression. Cysteines 610 and 616 form a disulfide. 3 N-linked (GlcNAc...) asparagine; by host glycosylation sites follow: N623, N638, and N650. A coiled-coil region spans residues 646–680 (QHINNVSSIIYDEIQAAQDQQEKNVKALLELDEWA). An MPER; binding to GalCer region spans residues 675-696 (ELDEWASLWNWFDITKWLWYIK). A helical transmembrane segment spans residues 698–718 (AIIIVGALIGIRVIMIILNLV). Over 719 to 876 (KNIRQGYQPL…IRQGAERILV (158 aa)) the chain is Cytoplasmic. The YXXL motif; contains endocytosis signal motif lies at 725-728 (YQPL).

It belongs to the HIV-1 env protein family. In terms of assembly, the mature envelope protein (Env) consists of a homotrimer of non-covalently associated gp120-gp41 heterodimers. The resulting complex protrudes from the virus surface as a spike. There seems to be as few as 10 spikes on the average virion. Interacts with host CD4, CCR5 and CXCR4. Gp120 also interacts with the C-type lectins CD209/DC-SIGN and CLEC4M/DC-SIGNR (collectively referred to as DC-SIGN(R)). Gp120 and gp41 interact with GalCer. Gp120 interacts with host ITGA4/ITGB7 complex; on CD4+ T-cells, this interaction results in rapid activation of integrin ITGAL/LFA-1, which facilitates efficient cell-to-cell spreading of HIV-1. Gp120 interacts with cell-associated heparan sulfate; this interaction increases virus infectivity on permissive cells and may be involved in infection of CD4- cells. As to quaternary structure, the mature envelope protein (Env) consists of a homotrimer of non-covalently associated gp120-gp41 heterodimers. The resulting complex protrudes from the virus surface as a spike. There seems to be as few as 10 spikes on the average virion. Post-translationally, highly glycosylated by host. The high number of glycan on the protein is reffered to as 'glycan shield' because it contributes to hide protein sequence from adaptive immune system. In terms of processing, palmitoylation of the transmembrane protein and of Env polyprotein (prior to its proteolytic cleavage) is essential for their association with host cell membrane lipid rafts. Palmitoylation is therefore required for envelope trafficking to classical lipid rafts, but not for viral replication. Specific enzymatic cleavages in vivo yield mature proteins. Envelope glycoproteins are synthesized as an inactive precursor that is heavily N-glycosylated and processed likely by host cell furin in the Golgi to yield the mature SU and TM proteins. The cleavage site between SU and TM requires the minimal sequence [KR]-X-[KR]-R. About 2 of the 9 disulfide bonds of gp41 are reduced by P4HB/PDI, following binding to CD4 receptor.

It localises to the virion membrane. Its subcellular location is the host cell membrane. It is found in the host endosome membrane. Oligomerizes in the host endoplasmic reticulum into predominantly trimers. In a second time, gp160 transits in the host Golgi, where glycosylation is completed. The precursor is then proteolytically cleaved in the trans-Golgi and thereby activated by cellular furin or furin-like proteases to produce gp120 and gp41. In terms of biological role, attaches the virus to the host lymphoid cell by binding to the primary receptor CD4. This interaction induces a structural rearrangement creating a high affinity binding site for a chemokine coreceptor like CXCR4 and/or CCR5. Acts as a ligand for CD209/DC-SIGN and CLEC4M/DC-SIGNR, which are respectively found on dendritic cells (DCs), and on endothelial cells of liver sinusoids and lymph node sinuses. These interactions allow capture of viral particles at mucosal surfaces by these cells and subsequent transmission to permissive cells. HIV subverts the migration properties of dendritic cells to gain access to CD4+ T-cells in lymph nodes. Virus transmission to permissive T-cells occurs either in trans (without DCs infection, through viral capture and transmission), or in cis (following DCs productive infection, through the usual CD4-gp120 interaction), thereby inducing a robust infection. In trans infection, bound virions remain infectious over days and it is proposed that they are not degraded, but protected in non-lysosomal acidic organelles within the DCs close to the cell membrane thus contributing to the viral infectious potential during DCs' migration from the periphery to the lymphoid tissues. On arrival at lymphoid tissues, intact virions recycle back to DCs' cell surface allowing virus transmission to CD4+ T-cells. Its function is as follows. Acts as a class I viral fusion protein. Under the current model, the protein has at least 3 conformational states: pre-fusion native state, pre-hairpin intermediate state, and post-fusion hairpin state. During fusion of viral and target intracellular membranes, the coiled coil regions (heptad repeats) assume a trimer-of-hairpins structure, positioning the fusion peptide in close proximity to the C-terminal region of the ectodomain. The formation of this structure appears to drive apposition and subsequent fusion of viral and target cell membranes. Complete fusion occurs in host cell endosomes and is dynamin-dependent, however some lipid transfer might occur at the plasma membrane. The virus undergoes clathrin-dependent internalization long before endosomal fusion, thus minimizing the surface exposure of conserved viral epitopes during fusion and reducing the efficacy of inhibitors targeting these epitopes. Membranes fusion leads to delivery of the nucleocapsid into the cytoplasm. The chain is Envelope glycoprotein gp160 from Homo sapiens (Human).